Here is a 278-residue protein sequence, read N- to C-terminus: Putative phosphoenolpyruvate synthase regulatory protein (278 aa).

157–164 (GVSRSGKT) is a binding site for ADP.

It belongs to the pyruvate, phosphate/water dikinase regulatory protein family. PSRP subfamily.

The catalysed reaction is [pyruvate, water dikinase] + ADP = [pyruvate, water dikinase]-phosphate + AMP + H(+). It catalyses the reaction [pyruvate, water dikinase]-phosphate + phosphate + H(+) = [pyruvate, water dikinase] + diphosphate. Functionally, bifunctional serine/threonine kinase and phosphorylase involved in the regulation of the phosphoenolpyruvate synthase (PEPS) by catalyzing its phosphorylation/dephosphorylation. This is Putative phosphoenolpyruvate synthase regulatory protein from Vibrio parahaemolyticus serotype O3:K6 (strain RIMD 2210633).